We begin with the raw amino-acid sequence, 309 residues long: Protein FdhE homolog (309 aa).

The protein belongs to the FdhE family.

It is found in the cytoplasm. Its function is as follows. Necessary for formate dehydrogenase activity. The sequence is that of Protein FdhE homolog from Enterobacter sp. (strain 638).